The following is a 499-amino-acid chain: Alpha-amylase 3 (499 aa).

Ca(2+) contacts are provided by asparagine 127 and aspartate 183. Catalysis depends on aspartate 213, which acts as the Nucleophile. Ca(2+) is bound at residue histidine 217. The active-site Proton donor is glutamate 248.

The protein belongs to the glycosyl hydrolase 13 family. As to quaternary structure, monomer. Requires Ca(2+) as cofactor.

The protein localises to the cytoplasm. It catalyses the reaction Endohydrolysis of (1-&gt;4)-alpha-D-glucosidic linkages in polysaccharides containing three or more (1-&gt;4)-alpha-linked D-glucose units.. This is Alpha-amylase 3 (amyC) from Dictyoglomus thermophilum (strain ATCC 35947 / DSM 3960 / H-6-12).